Reading from the N-terminus, the 440-residue chain is Beta-1,3-galactosyl-O-glycosyl-glycoprotein beta-1,6-N-acetylglucosaminyltransferase 3 (440 aa).

The Cytoplasmic segment spans residues 1–12 (MKMTGWKKKLCR). Residues 13 to 30 (GHHLWALGCYMLLAVVAL) form a helical; Signal-anchor for type II membrane protein membrane-spanning segment. Topologically, residues 31–440 (RLSLRLKCDV…RHKAIYGTEL (410 aa)) are lumenal. Residues Asn-72 and Asn-108 are each glycosylated (N-linked (GlcNAc...) asparagine). 4 disulfide bridges follow: Cys-73/Cys-230, Cys-164/Cys-384, Cys-185/Cys-212, and Cys-393/Cys-425.

Belongs to the glycosyltransferase 14 family. N-glycosylated. Primarily expressed in mucus-secreting tissues.

The protein resides in the golgi apparatus membrane. It carries out the reaction a 3-O-[beta-D-galactosyl-(1-&gt;3)-N-acetyl-alpha-D-galactosaminyl]-L-seryl-[protein] + UDP-N-acetyl-alpha-D-glucosamine = 3-O-{beta-D-galactosyl-(1-&gt;3)-[N-acetyl-beta-D-glucosaminyl-(1-&gt;6)]-N-acetyl-alpha-D-galactosaminyl}-L-seryl-[protein] + UDP + H(+). It catalyses the reaction a 3-O-[beta-D-galactosyl-(1-&gt;3)-N-acetyl-alpha-D-galactosaminyl]-L-threonyl-[protein] + UDP-N-acetyl-alpha-D-glucosamine = a 3-O-{beta-D-galactosyl-(1-&gt;3)-[N-acetyl-beta-D-glucosaminyl-(1-&gt;6)]-N-acetyl-alpha-D-galactosaminyl}-L-threonyl-[protein] + UDP + H(+). The catalysed reaction is a beta-D-Gal-(1-&gt;4)-beta-D-GlcNAc-(1-&gt;3)-beta-D-Gal-(1-&gt;4)-beta-D-GlcNAc derivative + UDP-N-acetyl-alpha-D-glucosamine = a beta-D-Gal-(1-&gt;4)-beta-D-GlcNAc-(1-&gt;3)-[beta-D-GlcNAc-(1-&gt;6)]-beta-D-Gal-(1-&gt;4)-N-acetyl-beta-D-glucosaminyl derivative + UDP + H(+). The enzyme catalyses 3-O-[N-acetyl-beta-D-glucosaminyl-(1-&gt;3)-N-acetyl-alpha-D-galactosaminyl]-L-seryl-[protein] + UDP-N-acetyl-alpha-D-glucosamine = 3-O-[N-acetyl-beta-D-glucosaminyl-(1-&gt;3)-[N-acetyl-beta-D-glucosaminyl-(1-&gt;6)]-N-acetyl-alpha-D-galactosaminyl]-L-seryl-[protein] + UDP + H(+). It carries out the reaction a 3-O-[N-acetyl-beta-D-glucosaminyl-(1-&gt;3)-N-acetyl-alpha-D-galactosaminyl]-L-threonyl-[protein] + UDP-N-acetyl-alpha-D-glucosamine = 3-O-[N-acetyl-beta-D-glucosaminyl-(1-&gt;3)-[N-acetyl-beta-D-glucosaminyl-(1-&gt;6)]-N-acetyl-alpha-D-galactosaminyl]-L-threonyl-[protein] + UDP + H(+). Its pathway is protein modification; protein glycosylation. Functionally, glycosyltransferase that can synthesize all known mucin beta 6 N-acetylglucosaminides. Mediates core 2 and core 4 O-glycan branching, 2 important steps in mucin-type biosynthesis. Also has I-branching enzyme activity by converting linear into branched poly-N-acetyllactosaminoglycans, leading to introduce the blood group I antigen during embryonic development. The chain is Beta-1,3-galactosyl-O-glycosyl-glycoprotein beta-1,6-N-acetylglucosaminyltransferase 3 (GCNT3) from Bos taurus (Bovine).